The chain runs to 158 residues: C-type lectin lectoxin-Enh4 (158 aa).

Positions 1–23 (MGQFTVVSLGLLAMFLSLSGAKG) are cleaved as a signal peptide. Cystine bridges form between Cys26–Cys37, Cys54–Cys154, and Cys129–Cys146. One can recognise a C-type lectin domain in the interval 33–155 (RNGVCNKLFP…CASLHPFICQ (123 aa)). Positions 119 to 121 (EPN) match the Mannose-binding motif. Residues Glu127, Asn142, and Asp143 each contribute to the Ca(2+) site.

Belongs to the true venom lectin family. Expressed by the venom gland.

The protein resides in the secreted. In terms of biological role, mannose-binding lectin which recognizes specific carbohydrate structures and agglutinates a variety of animal cells by binding to cell-surface glycoproteins and glycolipids. May be a calcium-dependent lectin. In Pseudoferania polylepis (Macleay's water snake), this protein is C-type lectin lectoxin-Enh4.